The primary structure comprises 180 residues: Flavodoxin 2 (180 aa).

A Flavodoxin-like domain is found at 4–173; the sequence is IGLFFGSNTG…RVAAWLAQIA (170 aa). Residues 10–15, Thr57, Gly61, Asp99, 106–108, and Asp155 each bind FMN; these read SNTGKT and NYL.

It depends on FMN as a cofactor.

Flavodoxins are low-potential electron donors to a number of redox enzymes. NifF is the electron donor to nitrogenase, and is thus implicated in nitrogen fixation. Does not function as an electron donor to nitrite reductase. The protein is Flavodoxin 2 of Azotobacter vinelandii.